A 177-amino-acid chain; its full sequence is Adenine phosphoribosyltransferase (177 aa).

Belongs to the purine/pyrimidine phosphoribosyltransferase family. As to quaternary structure, homodimer.

It localises to the cytoplasm. It catalyses the reaction AMP + diphosphate = 5-phospho-alpha-D-ribose 1-diphosphate + adenine. Its pathway is purine metabolism; AMP biosynthesis via salvage pathway; AMP from adenine: step 1/1. Catalyzes a salvage reaction resulting in the formation of AMP, that is energically less costly than de novo synthesis. In Chlorobium phaeovibrioides (strain DSM 265 / 1930) (Prosthecochloris vibrioformis (strain DSM 265)), this protein is Adenine phosphoribosyltransferase.